The chain runs to 126 residues: Aspartate 1-decarboxylase (126 aa).

The active-site Schiff-base intermediate with substrate; via pyruvic acid is serine 25. Pyruvic acid (Ser) is present on serine 25. Position 57 (threonine 57) interacts with substrate. The active-site Proton donor is tyrosine 58. 73–75 (GAA) contributes to the substrate binding site.

It belongs to the PanD family. As to quaternary structure, heterooctamer of four alpha and four beta subunits. Requires pyruvate as cofactor. Post-translationally, is synthesized initially as an inactive proenzyme, which is activated by self-cleavage at a specific serine bond to produce a beta-subunit with a hydroxyl group at its C-terminus and an alpha-subunit with a pyruvoyl group at its N-terminus.

The protein resides in the cytoplasm. The catalysed reaction is L-aspartate + H(+) = beta-alanine + CO2. It functions in the pathway cofactor biosynthesis; (R)-pantothenate biosynthesis; beta-alanine from L-aspartate: step 1/1. Its function is as follows. Catalyzes the pyruvoyl-dependent decarboxylation of aspartate to produce beta-alanine. The protein is Aspartate 1-decarboxylase of Escherichia coli O6:K15:H31 (strain 536 / UPEC).